A 46-amino-acid polypeptide reads, in one-letter code: Large ribosomal subunit protein bL36B (46 aa).

This sequence belongs to the bacterial ribosomal protein bL36 family.

The chain is Large ribosomal subunit protein bL36B from Enterobacter sp. (strain 638).